A 63-amino-acid chain; its full sequence is Race-specific elicitor A9 (63 aa).

An N-terminal signal peptide occupies residues 1 to 23 (MKLSLLSVELALLIATTLPLCWA). A propeptide spanning residues 24–35 (AALPVGLGVGLD) is cleaved from the precursor. 3 disulfides stabilise this stretch: Cys-37–Cys-51, Cys-41–Cys-54, and Cys-47–Cys-61.

Its function is as follows. This necrosis-inducing peptide induces a hypersensitive response on Cf-9 tomato genotypes. Race-specific elicitors are compounds which only induce defense responses in genotypes of host plants which are resistant to the pathogenic race that produces the elicitor, but not in susceptible genotypes. The polypeptide is Race-specific elicitor A9 (AVR9) (Passalora fulva (Tomato leaf mold)).